Here is a 231-residue protein sequence, read N- to C-terminus: DNA mismatch repair protein MutH (231 aa).

The protein belongs to the MutH family.

It is found in the cytoplasm. Sequence-specific endonuclease that cleaves unmethylated GATC sequences. It is involved in DNA mismatch repair. This chain is DNA mismatch repair protein MutH, found in Shewanella woodyi (strain ATCC 51908 / MS32).